The chain runs to 286 residues: Bifunctional protein FolD (286 aa).

NADP(+) contacts are provided by residues 165–167, Ser190, and Val231; that span reads GRS.

The protein belongs to the tetrahydrofolate dehydrogenase/cyclohydrolase family. In terms of assembly, homodimer.

It carries out the reaction (6R)-5,10-methylene-5,6,7,8-tetrahydrofolate + NADP(+) = (6R)-5,10-methenyltetrahydrofolate + NADPH. The enzyme catalyses (6R)-5,10-methenyltetrahydrofolate + H2O = (6R)-10-formyltetrahydrofolate + H(+). It participates in one-carbon metabolism; tetrahydrofolate interconversion. Its function is as follows. Catalyzes the oxidation of 5,10-methylenetetrahydrofolate to 5,10-methenyltetrahydrofolate and then the hydrolysis of 5,10-methenyltetrahydrofolate to 10-formyltetrahydrofolate. This is Bifunctional protein FolD from Bacillus cereus (strain G9842).